A 235-amino-acid polypeptide reads, in one-letter code: MNKMSHSEEFAAGEMNAIRASVWQLLSSLYAKELSRERICELAGAELWQAFAAQVELQASASQIQAALAHAAKYDASQGGDDARLELAADFCSAFLQNAEHCAAPYASLYLGDAGKTERNETASYDTESQDKAARSLYGEKHQLMSDYLRSAGLGLDADFREPSDHLAVILGLMAHLCTSATEESQRAFLESAILSWLPEFNARLGKLKLESPLYGALGDFTLAWARLDTELLGG.

It belongs to the TorD/DmsD family. TorD subfamily.

It localises to the cytoplasm. Its function is as follows. Involved in the biogenesis of TorA. Acts on TorA before the insertion of the molybdenum cofactor and, as a result, probably favors a conformation of the apoenzyme that is competent for acquiring the cofactor. In Shewanella amazonensis (strain ATCC BAA-1098 / SB2B), this protein is Chaperone protein TorD.